A 336-amino-acid polypeptide reads, in one-letter code: DNA-directed RNA polymerase subunit alpha (336 aa).

The alpha N-terminal domain (alpha-NTD) stretch occupies residues 1–232 (MIQKNWQELI…DQLGLFVNFE (232 aa)). The tract at residues 248–336 (FNPALLKKVD…ELAKRYEDQY (89 aa)) is alpha C-terminal domain (alpha-CTD).

The protein belongs to the RNA polymerase alpha chain family. Homodimer. The RNAP catalytic core consists of 2 alpha, 1 beta, 1 beta' and 1 omega subunit. When a sigma factor is associated with the core the holoenzyme is formed, which can initiate transcription.

It catalyses the reaction RNA(n) + a ribonucleoside 5'-triphosphate = RNA(n+1) + diphosphate. Functionally, DNA-dependent RNA polymerase catalyzes the transcription of DNA into RNA using the four ribonucleoside triphosphates as substrates. The sequence is that of DNA-directed RNA polymerase subunit alpha from Chelativorans sp. (strain BNC1).